The chain runs to 167 residues: MKKQKNNKKKNIEKRNIEKRNIEEKNNEDLEELENAIYTYHKKELLAFFLEKTRIGHDKEEYKRFQSLLYKLDIECLEFAISRFSHIDIIHDHSKYVPAFIPLFAAYLTMFFNFYEKHWGALSFAAGTIAAIVWIIAVERKHRNQAISIMKIFEQVKERKVKDRSKD.

2 helical membrane passes run 96-115 (YVPA…FNFY) and 119-138 (WGAL…IIAV).

The protein resides in the cell membrane. This is an uncharacterized protein from Bacillus subtilis (strain 168).